The following is a 229-amino-acid chain: MSTWANLGLQDSASPLMEQLIFFHDHALLILVMITVLVGYLMFMLFFNSYVNRFLLHGQLIEMIWTILPAIILLFIAMPSLRLLYLLDEINEPSITLKSIGHQWYWSYEYSDFNNIEFDSYMIPTNELANDGFRLLDVDNRIILPMNSQIRILVTAADVIHSWTVPALGVKVDGTPGRLNQTNFFINRPGLFYGQCSEICGANHSFMPIVIESVPVNYFIKWISNSVNS.

Residues 1–26 (MSTWANLGLQDSASPLMEQLIFFHDH) are Mitochondrial intermembrane-facing. Residues 27–48 (ALLILVMITVLVGYLMFMLFFN) traverse the membrane as a helical segment. Residues 49–62 (SYVNRFLLHGQLIE) lie on the Mitochondrial matrix side of the membrane. The helical transmembrane segment at 63 to 82 (MIWTILPAIILLFIAMPSLR) threads the bilayer. At 83-229 (LLYLLDEINE…IKWISNSVNS (147 aa)) the chain is on the mitochondrial intermembrane side. Positions 161, 196, 198, 200, 204, and 207 each coordinate Cu cation. Glutamate 198 provides a ligand contact to Mg(2+).

This sequence belongs to the cytochrome c oxidase subunit 2 family. As to quaternary structure, component of the cytochrome c oxidase (complex IV, CIV), a multisubunit enzyme composed of a catalytic core of 3 subunits and several supernumerary subunits. The complex exists as a monomer or a dimer and forms supercomplexes (SCs) in the inner mitochondrial membrane with ubiquinol-cytochrome c oxidoreductase (cytochrome b-c1 complex, complex III, CIII). Cu cation is required as a cofactor.

It is found in the mitochondrion inner membrane. It catalyses the reaction 4 Fe(II)-[cytochrome c] + O2 + 8 H(+)(in) = 4 Fe(III)-[cytochrome c] + 2 H2O + 4 H(+)(out). Functionally, component of the cytochrome c oxidase, the last enzyme in the mitochondrial electron transport chain which drives oxidative phosphorylation. The respiratory chain contains 3 multisubunit complexes succinate dehydrogenase (complex II, CII), ubiquinol-cytochrome c oxidoreductase (cytochrome b-c1 complex, complex III, CIII) and cytochrome c oxidase (complex IV, CIV), that cooperate to transfer electrons derived from NADH and succinate to molecular oxygen, creating an electrochemical gradient over the inner membrane that drives transmembrane transport and the ATP synthase. Cytochrome c oxidase is the component of the respiratory chain that catalyzes the reduction of oxygen to water. Electrons originating from reduced cytochrome c in the intermembrane space (IMS) are transferred via the dinuclear copper A center (CU(A)) of subunit 2 and heme A of subunit 1 to the active site in subunit 1, a binuclear center (BNC) formed by heme A3 and copper B (CU(B)). The BNC reduces molecular oxygen to 2 water molecules using 4 electrons from cytochrome c in the IMS and 4 protons from the mitochondrial matrix. This chain is Cytochrome c oxidase subunit 2 (mt:CoII), found in Drosophila narragansett (Fruit fly).